Reading from the N-terminus, the 245-residue chain is Membrane-spanning 4-domains subfamily A member 15 (245 aa).

The segment at 1 to 30 (MWERRGRGESAAGTAAVASRNASGLRPPPA) is disordered. A run of 4 helical transmembrane segments spans residues 78–98 (GTVQ…LLMV), 103–123 (LGML…FIIS), 147–167 (ILSA…FGVT), and 176–196 (LAVL…ATHF).

This sequence belongs to the MS4A family.

The protein resides in the membrane. Functionally, may be involved in signal transduction as a component of a multimeric receptor complex. The polypeptide is Membrane-spanning 4-domains subfamily A member 15 (Ms4a15) (Mus musculus (Mouse)).